The primary structure comprises 350 residues: Leucine-rich repeat-containing protein 58 (350 aa).

10 LRR repeats span residues 14–34 (NLTHLGLENLNLELVSENKRK), 35–56 (DVQQILLPHNRLVVLPPLVASF), 58–80 (HLHLLDISNNNMVYIGEEILGLT), 81–102 (KLKTLLAKNNRLDEFSFPKEMG), 105–125 (RLEVLNLSGNRFEEIPDQFLQ), 128–149 (TLKSLSLGGNRLKSIPAEIENL), 151–173 (SLEFLYLGGNFISSIPSELANLP), 174–195 (YLSYLVLCDNRIQSIPPQLAQV), 197–218 (SLRSLSLHNNLLTYLPREILSL), and 220–240 (HLHELSLRGNPLVVRFVRDLT).

The chain is Leucine-rich repeat-containing protein 58 (lrrc58) from Xenopus laevis (African clawed frog).